Reading from the N-terminus, the 289-residue chain is MIADPDQLMQKAAKKAQGTGGFALFGGGNKYDEASELFLDAANGYRLQKQGSAAGYAFEKAAEMQLKTDDKDDAASTYVEAFKSYRREKPSEAARVLQIAIELFTRRGNFRRAANYKMDLGDIFEQELQDTKAALGAYEDAGEWYSSDQADALANKAYLKAADLAGLCGEYSLAIRKFEQVARASVQNNLLKWSVKDYLLKAGLCYMANGDEIATRRALEHFLEIDPSFASTREYQLLKDLQDTIEASDANMFADKVFTYDQLSKLDSWKTTILLKIKSSIQEAEDDLT.

Ser76 bears the Phosphoserine mark.

Belongs to the SNAP family.

The protein localises to the membrane. In terms of biological role, required for vesicular transport between the endoplasmic reticulum and the Golgi apparatus. This is Probable vesicular-fusion protein sec17 homolog (sec17) from Schizosaccharomyces pombe (strain 972 / ATCC 24843) (Fission yeast).